Here is a 355-residue protein sequence, read N- to C-terminus: Lamassu protein LmuA (355 aa).

In terms of biological role, component of antiviral defense system Lamassu type II, composed of LmuA and LmuB. Expression of Lamassu type II in B.subtilis (strain BEST7003) confers resistance to phage SpBeta. May be a nuclease. The sequence is that of Lamassu protein LmuA from Bacillus cereus (strain VD014).